Consider the following 561-residue polypeptide: DNA ligase B (561 aa).

Lysine 125 functions as the N6-AMP-lysine intermediate in the catalytic mechanism.

This sequence belongs to the NAD-dependent DNA ligase family. LigB subfamily.

The catalysed reaction is NAD(+) + (deoxyribonucleotide)n-3'-hydroxyl + 5'-phospho-(deoxyribonucleotide)m = (deoxyribonucleotide)n+m + AMP + beta-nicotinamide D-nucleotide.. Functionally, catalyzes the formation of phosphodiester linkages between 5'-phosphoryl and 3'-hydroxyl groups in double-stranded DNA using NAD as a coenzyme and as the energy source for the reaction. The protein is DNA ligase B of Salmonella agona (strain SL483).